Consider the following 234-residue polypeptide: Large ribosomal subunit protein uL1 (234 aa).

This sequence belongs to the universal ribosomal protein uL1 family. As to quaternary structure, part of the 50S ribosomal subunit.

Its function is as follows. Binds directly to 23S rRNA. The L1 stalk is quite mobile in the ribosome, and is involved in E site tRNA release. In terms of biological role, protein L1 is also a translational repressor protein, it controls the translation of the L11 operon by binding to its mRNA. The sequence is that of Large ribosomal subunit protein uL1 from Helicobacter acinonychis (strain Sheeba).